We begin with the raw amino-acid sequence, 49 residues long: Large ribosomal subunit protein bL33 (49 aa).

The protein belongs to the bacterial ribosomal protein bL33 family.

The chain is Large ribosomal subunit protein bL33 from Streptococcus suis (strain 98HAH33).